The following is a 390-amino-acid chain: Centrosomal protein of 44 kDa (390 aa).

The binds with microtubules and centrioles stretch occupies residues 11–195 (RNLEQVLRLL…ISEDTLSPIT (185 aa)). Residues 233-269 (EITALQTMLAECQENLKKLTSIEKRLDCLEQKMKGKV) adopt a coiled-coil conformation. Residues 322–348 (RKSEVERPASIPLSSGYSTASSDSTPR) are disordered. Residues S331 and S345 each carry the phosphoserine modification. A compositionally biased stretch (low complexity) spans 335-345 (SSGYSTASSDS). T346 carries the phosphothreonine modification. The stretch at 361-385 (SEETTIQKMERMKKMFEETAELLKC) forms a coiled coil.

In terms of assembly, interacts with CROCC. Interacts with POC1B; the interaction is direct and recruits POC1B to centriolar microtubules. Binds to centriolar microtubules.

It is found in the cytoplasm. The protein resides in the cytoskeleton. It localises to the microtubule organizing center. Its subcellular location is the centrosome. The protein localises to the centriole. It is found in the spindle pole. The protein resides in the midbody. Functionally, centriole-enriched microtubule-binding protein involved in centriole biogenesis. In collaboration with CEP295 and POC1B, is required for the centriole-to-centrosome conversion by ensuring the formation of bona fide centriole wall. Functions as a linker component that maintains centrosome cohesion. Associates with CROCC and regulates its stability and localization to the centrosome. This chain is Centrosomal protein of 44 kDa (CEP44), found in Homo sapiens (Human).